The chain runs to 113 residues: Large ribosomal subunit protein uL22 (113 aa).

This sequence belongs to the universal ribosomal protein uL22 family. As to quaternary structure, part of the 50S ribosomal subunit.

This protein binds specifically to 23S rRNA; its binding is stimulated by other ribosomal proteins, e.g. L4, L17, and L20. It is important during the early stages of 50S assembly. It makes multiple contacts with different domains of the 23S rRNA in the assembled 50S subunit and ribosome. Functionally, the globular domain of the protein is located near the polypeptide exit tunnel on the outside of the subunit, while an extended beta-hairpin is found that lines the wall of the exit tunnel in the center of the 70S ribosome. The polypeptide is Large ribosomal subunit protein uL22 (Geobacillus kaustophilus (strain HTA426)).